A 355-amino-acid chain; its full sequence is Phosphoribosylformylglycinamidine cyclo-ligase (355 aa).

It belongs to the AIR synthase family.

The protein resides in the cytoplasm. It catalyses the reaction 2-formamido-N(1)-(5-O-phospho-beta-D-ribosyl)acetamidine + ATP = 5-amino-1-(5-phospho-beta-D-ribosyl)imidazole + ADP + phosphate + H(+). Its pathway is purine metabolism; IMP biosynthesis via de novo pathway; 5-amino-1-(5-phospho-D-ribosyl)imidazole from N(2)-formyl-N(1)-(5-phospho-D-ribosyl)glycinamide: step 2/2. This is Phosphoribosylformylglycinamidine cyclo-ligase from Paraburkholderia phymatum (strain DSM 17167 / CIP 108236 / LMG 21445 / STM815) (Burkholderia phymatum).